The following is an 87-amino-acid chain: Virulence protein PagD (87 aa).

Residues 1–20 (MKHHAFMLWSLLIFSFHVLA) form the signal peptide. The interval 46–87 (QPPTNTDKKQARQISSPSCPTTKPMMSAPVNDARKGNTFSRT) is disordered. Polar residues predominate over residues 57-66 (RQISSPSCPT).

Functionally, putative function in virulence. Could be involved in promoting S.typhimurium survival within macrophages. This chain is Virulence protein PagD (pagD), found in Salmonella typhimurium (strain LT2 / SGSC1412 / ATCC 700720).